The following is a 142-amino-acid chain: 3-hydroxyacyl-[acyl-carrier-protein] dehydratase FabZ (142 aa).

The active site involves His-41.

The protein belongs to the thioester dehydratase family. FabZ subfamily.

It is found in the cytoplasm. The enzyme catalyses a (3R)-hydroxyacyl-[ACP] = a (2E)-enoyl-[ACP] + H2O. Functionally, involved in unsaturated fatty acids biosynthesis. Catalyzes the dehydration of short chain beta-hydroxyacyl-ACPs and long chain saturated and unsaturated beta-hydroxyacyl-ACPs. The chain is 3-hydroxyacyl-[acyl-carrier-protein] dehydratase FabZ from Symbiobacterium thermophilum (strain DSM 24528 / JCM 14929 / IAM 14863 / T).